The following is a 462-amino-acid chain: Aquaporin-1 (462 aa).

Polar residues predominate over residues 1-11 (MTMRSPLTNDH). The interval 1–24 (MTMRSPLTNDHPQPLRASPLSEHD) is disordered. Residues 1 to 146 (MTMRSPLTND…KWMNSDWKNH (146 aa)) lie on the Cytoplasmic side of the membrane. A helical membrane pass occupies residues 147–167 (IVAVIGELIGTSLFLFFGYAG). Residues 168 to 182 (IEVAKLQGREPPDLE) are Extracellular-facing. A helical membrane pass occupies residues 183-203 (VLFYISATFGASLMVTAWIFF). At 204-229 (RISGGLFNPAVTLALAILKAVSPIRA) the chain is on the cytoplasmic side. Residues 211 to 213 (NPA) carry the NPA 1 motif. The chain crosses the membrane as a helical span at residues 230–250 (FLLVITQLGASCLAAILVQEI). Over 251–269 (FPKQLDVATTLGSGTSMGQ) the chain is Extracellular. Residues 270-290 (GFVIEAITTAALIFTIIMLAV) form a helical membrane-spanning segment. The Cytoplasmic segment spans residues 291-296 (EKHKAT). Residues 297–317 (FVAPIGIGLALFVAHMVAVPF) form a helical membrane-spanning segment. The Extracellular portion of the chain corresponds to 318–341 (TGASLNPARSFGPSAIVWNFPREH). Residues 323-325 (NPA) carry the NPA 2 motif. Residues 342-362 (WIYWVGPILGAGLAVLFFRLI) traverse the membrane as a helical segment. The Cytoplasmic portion of the chain corresponds to 363–462 (KLMEYEMANP…WRRQQYRNVV (100 aa)). The interval 407–433 (GKSWYRDDSSSGSMRRKESVNSFTGGR) is disordered. Basic and acidic residues predominate over residues 410 to 425 (WYRDDSSSGSMRRKES).

The protein belongs to the MIP/aquaporin (TC 1.A.8) family.

The protein resides in the membrane. It carries out the reaction H2O(in) = H2O(out). Its function is as follows. Water channel required to facilitate the transport of water across membranes. Involved in conidiation. The polypeptide is Aquaporin-1 (Botryotinia fuckeliana (strain B05.10) (Noble rot fungus)).